We begin with the raw amino-acid sequence, 384 residues long: FAD-dependent urate hydroxylase (384 aa).

FAD-binding positions include glycine 11, 30–31 (EA), serine 43, and valine 125. Substrate-binding positions include asparagine 178, arginine 204, and 216–218 (YFF). FAD contacts are provided by residues aspartate 285 and 295-299 (GQGGC).

This sequence belongs to the FAD-dependent urate hydroxylase family. FAD serves as cofactor.

The enzyme catalyses urate + NADH + O2 + H(+) = 5-hydroxyisourate + NAD(+) + H2O. Its pathway is purine metabolism; urate degradation. In terms of biological role, catalyzes the hydroxylation of uric acid to 5-hydroxyisourate. This Klebsiella oxytoca protein is FAD-dependent urate hydroxylase (hpxO).